Consider the following 71-residue polypeptide: Pro-MCH (71 aa).

An N-terminal signal peptide occupies residues Ala-1–Gly-20.

Belongs to the melanin-concentrating hormone family.

Its subcellular location is the secreted. The chain is Pro-MCH (PMCH) from Hylobates lar (Lar gibbon).